Reading from the N-terminus, the 145-residue chain is Deoxyuridine 5'-triphosphate nucleotidohydrolase (145 aa).

Substrate is bound by residues 64–66, asparagine 77, 81–83, and methionine 91; these read RSG and TID.

This sequence belongs to the dUTPase family. Requires Mg(2+) as cofactor.

It carries out the reaction dUTP + H2O = dUMP + diphosphate + H(+). It participates in pyrimidine metabolism; dUMP biosynthesis; dUMP from dCTP (dUTP route): step 2/2. Functionally, this enzyme is involved in nucleotide metabolism: it produces dUMP, the immediate precursor of thymidine nucleotides and it decreases the intracellular concentration of dUTP so that uracil cannot be incorporated into DNA. This is Deoxyuridine 5'-triphosphate nucleotidohydrolase from Leptospira borgpetersenii serovar Hardjo-bovis (strain JB197).